The primary structure comprises 225 residues: Phosphoserine phosphatase (225 aa).

Met1 is modified (N-acetylmethionine). Asp20 acts as the Nucleophile in catalysis. 2 residues coordinate Mg(2+): Asp20 and Asp22. 20–22 (DVD) is an L-serine binding site. Residue Asp22 is the Proton donor of the active site. Met52 is a binding site for O-phospho-L-serine. Gly53 contributes to the phosphate binding site. L-serine contacts are provided by residues 109-111 (SGG) and Lys158. O-phospho-L-serine is bound by residues 109–111 (SGG) and Lys158. Position 179 (Asp179) interacts with Mg(2+). An O-phospho-L-serine-binding site is contributed by Thr182. Phosphate is bound at residue Thr182.

This sequence belongs to the HAD-like hydrolase superfamily. SerB family. In terms of assembly, homodimer. Mg(2+) serves as cofactor.

The protein resides in the cytoplasm. Its subcellular location is the cytosol. It carries out the reaction O-phospho-L-serine + H2O = L-serine + phosphate. It catalyses the reaction O-phospho-D-serine + H2O = D-serine + phosphate. It participates in amino-acid biosynthesis; L-serine biosynthesis; L-serine from 3-phospho-D-glycerate: step 3/3. Its function is as follows. Catalyzes the last irreversible step in the biosynthesis of L-serine from carbohydrates, the dephosphorylation of O-phospho-L-serine to L-serine. L-serine can then be used in protein synthesis, to produce other amino acids, in nucleotide metabolism or in glutathione synthesis, or can be racemized to D-serine, a neuromodulator. May also act on O-phospho-D-serine. This is Phosphoserine phosphatase from Bos taurus (Bovine).